Consider the following 487-residue polypeptide: Uronate isomerase (487 aa).

This sequence belongs to the metallo-dependent hydrolases superfamily. Uronate isomerase family.

The catalysed reaction is D-glucuronate = D-fructuronate. The enzyme catalyses aldehydo-D-galacturonate = keto-D-tagaturonate. The protein operates within carbohydrate metabolism; pentose and glucuronate interconversion. The polypeptide is Uronate isomerase (Caulobacter vibrioides (strain ATCC 19089 / CIP 103742 / CB 15) (Caulobacter crescentus)).